The primary structure comprises 270 residues: MATYVVGDLHGCFDELQLLLKQVNYNPAQDELWLTGDLVARGAKSLECLRFVKDPKNNAKTILGNHDLHLLATLLGIKKVKPNDQVDAIFAAEDRADLQNWLRNQPLLIQHPKYGFLLTHAGISPEWNLTETIACAREAEAVLQSGHYADYIAQMYENTPDHWSAEWQGIERWRYIINVFTRMRFCYADKRLDFACKLPVEDAPNELKPWFKLDNPLFHQQDIIFGHWASLMGKADKPNIYALDTGCAWGNHLTMIRWEDKQIFTQERLK.

This sequence belongs to the Ap4A hydrolase family.

It catalyses the reaction P(1),P(4)-bis(5'-adenosyl) tetraphosphate + H2O = 2 ADP + 2 H(+). Hydrolyzes diadenosine 5',5'''-P1,P4-tetraphosphate to yield ADP. This chain is Bis(5'-nucleosyl)-tetraphosphatase, symmetrical, found in Actinobacillus pleuropneumoniae serotype 3 (strain JL03).